The sequence spans 1935 residues: Rho GTPase-activating protein 21 (1935 aa).

Residues 1 to 46 (MATRRATVPEQQQQQPSSPGSEISKNKDGQEQSEMVSPTEEEGFCW) are disordered. The region spanning 78–163 (HTTVKDEENG…TLELSVMPKD (86 aa)) is the PDZ domain. Disordered stretches follow at residues 212-237 (VEVPPSGTSLTKQQSSRPVRTATTQP), 339-373 (PPSYGGHSESMFSTRPSQAEESPSPTNHYASPGSH), 413-456 (QNTT…QERL), 673-718 (TSTS…DSNS), and 862-919 (NSKT…DVFS). Composition is skewed to polar residues over residues 217 to 237 (SGTSLTKQQSSRPVRTATTQP), 348 to 373 (SMFSTRPSQAEESPSPTNHYASPGSH), and 413 to 429 (QNTTDYDQMLPNRSSGQ). Composition is skewed to low complexity over residues 441 to 451 (PQSVQMRQRSV) and 673 to 685 (TSTSASSSSPAHT). Positions 708–718 (SPEANAGDSNS) are enriched in polar residues. The span at 863 to 884 (SKTERSKSCDEGLDDYKDEGKL) shows a compositional bias: basic and acidic residues. A PH domain is found at 920–1033 (DSNKEGFLYF…WIKAIQENGN (114 aa)). The segment at 1056–1126 (TMMSSSSNKS…KGSWRRIMKK (71 aa)) is disordered. Residues 1059–1072 (SSSSNKSEQSPKPS) show a composition bias toward low complexity. The span at 1097-1119 (PKQESERRLFSKDDISPPKDKGS) shows a compositional bias: basic and acidic residues. The region spanning 1140-1332 (VRLDDCPPAH…TLIQQHDWFF (193 aa)) is the Rho-GAP domain. Disordered regions lie at residues 1341–1393 (ITAV…GSGK), 1411–1431 (RKRKKQRDKPQPSSSEDELDN), 1488–1510 (SEATSPCPPKLSEPPIVNHRLPP), 1525–1548 (SMSDSGTMLSTSSQASAQRSKPKV), 1637–1665 (HRSKVEEPTRNVQVNSEGSPSCTEGSITP), 1688–1733 (SIRQ…EPEE), and 1838–1925 (SELS…SGTQ). The span at 1345 to 1355 (QEESTVESQPV) shows a compositional bias: polar residues. Residues 1376–1393 (SDSASDSAKSKGSWGSGK) are compositionally biased toward low complexity. Composition is skewed to polar residues over residues 1525–1543 (SMSDSGTMLSTSSQASAQR) and 1646–1662 (RNVQVNSEGSPSCTEGS). The segment covering 1691-1705 (QKTDSECSAESKNEE) has biased composition (basic and acidic residues). Polar residues-rich tracts occupy residues 1872-1889 (QVSTAIVTAGSESPSQGT) and 1898-1911 (NGDSFQSKNKNNFS).

It is found in the golgi apparatus membrane. Its subcellular location is the cell junction. It localises to the cytoplasmic vesicle membrane. The protein localises to the cytoplasm. The protein resides in the cytoskeleton. In terms of biological role, GTPase-activating protein (GAP) for rhoa and cdc42. This Xenopus tropicalis (Western clawed frog) protein is Rho GTPase-activating protein 21 (arhgap21).